The sequence spans 110 residues: Small ribosomal subunit protein bS16 (110 aa).

The tract at residues 79–110 is disordered; sequence AAGVKKREARNNPQKAVPRKERKAQAEAAAKG.

The protein belongs to the bacterial ribosomal protein bS16 family.

The chain is Small ribosomal subunit protein bS16 from Bradyrhizobium diazoefficiens (strain JCM 10833 / BCRC 13528 / IAM 13628 / NBRC 14792 / USDA 110).